The following is a 516-amino-acid chain: MPSSTSPDQGDDLETCILRFSDLDLKDMSLINPSSSLKAELDGSTKKKYSFAKKKAFALFVKTKEVPTKRSFECKEKLWKCCQQLFTDQTSIHRHVATQHADEIYHQTASILKQLAVTLSTSKSLSSADEKNPLKECLPHSHDVSAWLPDISCFNPDELISGQGSEEGEVLLYYCYRDLEDPQWICAWQTALCQQLHLTGKIRIAAEGINGTVGGSKLATRLYVEVMLSFPLFKDDLCKDDFKTSKGGAHCFPELRVGVFEEIVPMGISPKKISYKKPGIHLSPGEFHKEVEKFLSQANQEQSDTILLDCRNFYESKIGRFQGCLAPDIRKFSYFPSYVDKNLELFREKRVLMYCTGGIRCERGSAYLKAKGVCKEVFQLKGGIHKYLEEFPDGFYKGKLFVFDERYALSYNSDVVSECSYCGARWDQYKLCSTPQCHQLVLTCPACQGQGFTACCVTCQDKGSRKVSGPMQDSFKEECECTARRPRIPRELLQHVRQPVSPEPGPDAEEDGPVLV.

Serine 269 bears the Phosphoserine mark. The Rhodanese domain occupies glutamate 301–tyrosine 396. Cysteine 355 acts as the Cysteine persulfide intermediate in catalysis. The tract at residues arginine 490–valine 516 is disordered. Positions proline 506 to valine 516 are enriched in acidic residues.

The polypeptide is Thiosulfate sulfurtransferase/rhodanese-like domain-containing protein 2 (TSTD2) (Pongo abelii (Sumatran orangutan)).